Reading from the N-terminus, the 260-residue chain is Tryptophan 2,3-dioxygenase (260 aa).

Residues F34–H38 and R100 contribute to the substrate site. Heme is bound at residue H219. T233 contributes to the substrate binding site.

The protein belongs to the tryptophan 2,3-dioxygenase family. As to quaternary structure, homotetramer. Heme serves as cofactor.

The catalysed reaction is L-tryptophan + O2 = N-formyl-L-kynurenine. It participates in amino-acid degradation; L-tryptophan degradation via kynurenine pathway; L-kynurenine from L-tryptophan: step 1/2. Heme-dependent dioxygenase that catalyzes the oxidative cleavage of the L-tryptophan (L-Trp) pyrrole ring and converts L-tryptophan to N-formyl-L-kynurenine. Catalyzes the oxidative cleavage of the indole moiety. The sequence is that of Tryptophan 2,3-dioxygenase from Herpetosiphon aurantiacus (strain ATCC 23779 / DSM 785 / 114-95).